Reading from the N-terminus, the 217-residue chain is UPF0502 protein VF_A0604 (217 aa).

The protein belongs to the UPF0502 family.

The sequence is that of UPF0502 protein VF_A0604 from Aliivibrio fischeri (strain ATCC 700601 / ES114) (Vibrio fischeri).